Here is a 421-residue protein sequence, read N- to C-terminus: Core-capsid bridging protein (421 aa).

Belongs to the adenoviridae core-capsid bridging protein family. As to quaternary structure, monomer. Homodimer. Exists in equilibrium between monomers and dimers in solution. Interacts with the histone-like nucleoprotein; this interactions bridge the virus core to the capsid. Interacts with core protein X; this interactions bridge the virus core to the capsid. Interacts with the endosome lysis protein VI; this interactions bridge the virus core to the capsid. Interacts with the peripentonal hexons. Interacts with host NPM1; this interaction might play a role in virus assembly.

The protein localises to the virion. Its subcellular location is the host nucleus. It is found in the host nucleolus. Functionally, associates loosely with the viral DNA to form an outer shell around the nucleoprotein-DNA complex and links it with the capsid by binding the endosome lysis protein. Dissociates from the viral genome during entry. Might be involved in nuclear capsid assembly of the viral particles through its association with NPM1/nucleophosmin. The protein is Core-capsid bridging protein of Canine adenovirus serotype 1 (strain RI261) (CAdV-1).